Consider the following 778-residue polypeptide: MKMTVDFEECLKDSPRFRAALEEVEGDVAELELKLDKLVKLCIAMIDTGKAFCVANKQFMNGIRDLAQYSSNDAVVETSLTKFSDSLQEMINFHTILFDQTQRSIKAQLQNFVKEDLRKFKDAKKQFEKVSEEKENALVKNAQVQRNKQHEVEEATNILTATRKCFRHIALDYVLQINVLQSKRRSEILKSMLSFMYAHLAFFHQGYDLFSELGPYMKDLGAQLDRLVVDAAKEKREMEQKHSTIQQKDFSSDDSKLEYNVDAANGIVMEGYLFKRASNAFKTWNRRWFSIQNNQLVYQKKFKDNPTVVVEDLRLCTVKHCEDIERRFCFEVVSPTKSCMLQADSEKLRQAWIKAVQTSIATAYREKGDESEKLDKKSSPSTGSLDSGNESKEKLLKGESALQRVQCIPGNASCCDCGLADPRWASINLGITLCIECSGIHRSLGVHFSKVRSLTLDTWEPELLKLMCELGNDVINRVYEANVEKMGIKKPQPGQRQEKEAYIRAKYVERKFVDKYSISLSPPEQQKKFVSKSSEEKRLSISKFGPGDQVRASAQSSVRSNDSGIQQSSDDGRESLPSTVSANSLYEPEGERQDSSMFLDSKHLNPGLQLYRASYEKNLPKMAEALAHGADVNWANSEENKATPLIQAVLGGSLVTCEFLLQNGANVNQRDVQGRGPLHHATVLGHTGQVCLFLKRGANQHATDEEGKDPLSIAVEAANADIVTLLRLARMNEEMRESEGLYGQPGDETYQDIFRDFSQMASNNPEKLNRFQQDSQKF.

Residues 1–226 enclose the BAR domain; sequence MKMTVDFEEC…MKDLGAQLDR (226 aa). The 96-residue stretch at 266-361 folds into the PH domain; that stretch reads GIVMEGYLFK…WIKAVQTSIA (96 aa). The tract at residues 371–391 is disordered; that stretch reads SEKLDKKSSPSTGSLDSGNES. Over residues 379–388 the composition is skewed to polar residues; that stretch reads SPSTGSLDSG. Serine 384 and serine 387 each carry phosphoserine. The 122-residue stretch at 399–520 folds into the Arf-GAP domain; sequence ESALQRVQCI…KFVDKYSISL (122 aa). The segment at 414 to 437 adopts a C4-type zinc-finger fold; that stretch reads CCDCGLADPRWASINLGITLCIEC. Serine 521 is modified (phosphoserine). The disordered stretch occupies residues 540-599; it reads SISKFGPGDQVRASAQSSVRSNDSGIQQSSDDGRESLPSTVSANSLYEPEGERQDSSMFL. Positions 552 to 569 are enriched in polar residues; it reads ASAQSSVRSNDSGIQQSS. Phosphoserine is present on residues serine 581 and serine 584. ANK repeat units lie at residues 640–669, 673–702, and 706–735; these read NKATPLIQAVLGGSLVTCEFLLQNGANVNQ, QGRGPLHHATVLGHTGQVCLFLKRGANQHA, and EGKDPLSIAVEAANADIVTLLRLARMNEEM. Residue tyrosine 742 is modified to Phosphotyrosine. Serine 775 is modified (phosphoserine).

In terms of assembly, interacts (via KANK domains) with RAB35 (GTP-bound form); the interaction is direct and probably recruits ACAP2 to membranes including plasma membrane. Interacts with MICALL1; the interaction is indirect through RAB35. As to expression, widely expressed. Highest level in lung.

The protein localises to the cell membrane. It localises to the endosome membrane. Its activity is regulated as follows. GAP activity stimulated by phosphatidylinositol 4,5-bisphosphate (PIP2) and phosphatidic acid. GTPase-activating protein (GAP) for ADP ribosylation factor 6 (ARF6). Doesn't show GAP activity for RAB35. The polypeptide is Arf-GAP with coiled-coil, ANK repeat and PH domain-containing protein 2 (ACAP2) (Homo sapiens (Human)).